Here is a 656-residue protein sequence, read N- to C-terminus: Receptor-type tyrosine-protein phosphatase R (656 aa).

Residues 1-23 (MRRAVGFPALCLLLNLHAAGCFS) form the signal peptide. An O-linked (Xyl...) (chondroitin sulfate) serine glycan is attached at serine 23. Topologically, residues 24-226 (RNNDHFLAIR…EADKIWSKEG (203 aa)) are extracellular. N-linked (GlcNAc...) asparagine glycosylation occurs at asparagine 128. The chain crosses the membrane as a helical span at residues 227-247 (FYAVVIFLSIFIIIVTCLMII). The Cytoplasmic segment spans residues 248–656 (YRLKERLQLS…ESRLSPETVE (409 aa)). Positions 269 to 289 (HLSPIARQQAQSEAKTTHSMV) are disordered. Phosphoserine is present on serine 271. Residues 274–289 (ARQQAQSEAKTTHSMV) show a composition bias toward polar residues. A Phosphoserine; by PKA modification is found at serine 338. Positions 392–646 (LQSEFMEIPM…EFVHHALCLF (255 aa)) constitute a Tyrosine-protein phosphatase domain. Substrate is bound by residues aspartate 553, 587–593 (CSAGIGR), and glutamine 631. Catalysis depends on cysteine 587, which acts as the Phosphocysteine intermediate.

The protein belongs to the protein-tyrosine phosphatase family. Receptor class 7 subfamily. In terms of assembly, interacts with MAPKs. Expressed in the heart, brain, spleen, lung, liver, skeletal muscle, kidney and testis. Isoform alpha is expressed throughout the granular layer of the cerebellar but not within the Purkinje cells, also in the villi of the ileum and jejunum and both the villi and crypts of the duodenum. Isoform beta is expressed only in the Purkinje cells. Isoform gamma is expressed throughout the brain, the villi and crypts of the duodenum, jejunum and ileum and expressed at low levels in the proximal colon.

Its subcellular location is the cell membrane. It localises to the cytoplasm. The enzyme catalyses O-phospho-L-tyrosyl-[protein] + H2O = L-tyrosyl-[protein] + phosphate. Functionally, sequesters mitogen-activated protein kinases (MAPKs) such as MAPK1, MAPK3 and MAPK14 in the cytoplasm in an inactive form. The MAPKs bind to a dephosphorylated kinase interacting motif, phosphorylation of which by the protein kinase A complex releases the MAPKs for activation and translocation into the nucleus. Isoform gamma may have a role in patterning and cellular proliferation of skeletal elements in the precartilaginous/cartilaginous skeleton. The sequence is that of Receptor-type tyrosine-protein phosphatase R (Ptprr) from Mus musculus (Mouse).